A 185-amino-acid polypeptide reads, in one-letter code: Elongation factor P (185 aa).

Belongs to the elongation factor P family.

It is found in the cytoplasm. It participates in protein biosynthesis; polypeptide chain elongation. Its function is as follows. Involved in peptide bond synthesis. Stimulates efficient translation and peptide-bond synthesis on native or reconstituted 70S ribosomes in vitro. Probably functions indirectly by altering the affinity of the ribosome for aminoacyl-tRNA, thus increasing their reactivity as acceptors for peptidyl transferase. The polypeptide is Elongation factor P (Metamycoplasma arthritidis (strain 158L3-1) (Mycoplasma arthritidis)).